A 426-amino-acid chain; its full sequence is UPF0597 protein CLI_1810 (426 aa).

The protein belongs to the UPF0597 family.

The polypeptide is UPF0597 protein CLI_1810 (Clostridium botulinum (strain Langeland / NCTC 10281 / Type F)).